The sequence spans 599 residues: MTPDELNIILPTLPEKPGCYQYFDEDGKVIYVGKAKNLRRRVSSYFYKEHADRKTRILVRQIRSIKYIVVDSEGDALLLENSLIKEYQPRYNVLLKDGKTYPSIVIKREPFPRIFATRDIKKDGSEYFGPYPGALIAKGMLRLVKEIYPIRTCKLDLREEKIRQGRYRVCLQYHIKKCKGPCIGNQTSNEYESNVSEIRDLLRGNLHRLVRMYRDRMQVYSEGLRFEEAQICKERIELLERYEAKHTVVPRNIDNVDVFSYDEDEHTAYINYMHIEHGGINRVYTLEYRKQIEESKEELLAAAITELRQRFESNAHEIVLPFDTGWQTGESITTTIPRRGDKRKLLELSEKNVAQYKLDKLKRAEKLNPEQRALHIVHGIQKDLHLDRPPKHIECFDNSNIQGTSPVAACVVFKMGKPSKKDYRKFHVKTVEGPNDFASMREIISRHYTRLTEENLPLPDLIVVDGGKGQLSAAYETLDKLGLIGKIPIIGLAERLEEIFFPKDPVPLILDKKSETLKVIQHLRDEAHRFGIGFHRDVRSKKQIQSELDNIKGIGKKTKEDLLRHFKSVKRIRSAEEEELSALIGRNKAKLLYEGLRKK.

Positions 15 to 93 constitute a GIY-YIG domain; sequence EKPGCYQYFD…IKEYQPRYNV (79 aa). Residues 207–242 form the UVR domain; sequence HRLVRMYRDRMQVYSEGLRFEEAQICKERIELLERY.

The protein belongs to the UvrC family. As to quaternary structure, interacts with UvrB in an incision complex.

The protein resides in the cytoplasm. Its function is as follows. The UvrABC repair system catalyzes the recognition and processing of DNA lesions. UvrC both incises the 5' and 3' sides of the lesion. The N-terminal half is responsible for the 3' incision and the C-terminal half is responsible for the 5' incision. The protein is UvrABC system protein C of Porphyromonas gingivalis (strain ATCC BAA-308 / W83).